A 187-amino-acid chain; its full sequence is Elongation factor P (187 aa).

Belongs to the elongation factor P family.

The protein resides in the cytoplasm. Its pathway is protein biosynthesis; polypeptide chain elongation. In terms of biological role, involved in peptide bond synthesis. Stimulates efficient translation and peptide-bond synthesis on native or reconstituted 70S ribosomes in vitro. Probably functions indirectly by altering the affinity of the ribosome for aminoacyl-tRNA, thus increasing their reactivity as acceptors for peptidyl transferase. This chain is Elongation factor P, found in Mycobacterium sp. (strain JLS).